A 202-amino-acid chain; its full sequence is Dephospho-CoA kinase (202 aa).

The region spanning 3–202 (IFGLTGGIGS…ISHRSKYLSC (200 aa)) is the DPCK domain. 11–16 (GSGKSL) lines the ATP pocket.

It belongs to the CoaE family.

It is found in the cytoplasm. It catalyses the reaction 3'-dephospho-CoA + ATP = ADP + CoA + H(+). It participates in cofactor biosynthesis; coenzyme A biosynthesis; CoA from (R)-pantothenate: step 5/5. Its function is as follows. Catalyzes the phosphorylation of the 3'-hydroxyl group of dephosphocoenzyme A to form coenzyme A. This Ehrlichia chaffeensis (strain ATCC CRL-10679 / Arkansas) protein is Dephospho-CoA kinase.